Reading from the N-terminus, the 475-residue chain is Enolase (475 aa).

Gln179 contacts (2R)-2-phosphoglycerate. Glu221 (proton donor) is an active-site residue. Residues Asp258, Glu312, and Asp339 each coordinate Mg(2+). (2R)-2-phosphoglycerate contacts are provided by Lys364, Arg393, Ser394, and Lys415. Lys364 functions as the Proton acceptor in the catalytic mechanism. The tract at residues 454-475 (STPAATPKKSPAKKTTKAKSKK) is disordered. Over residues 463–475 (SPAKKTTKAKSKK) the composition is skewed to basic residues.

Belongs to the enolase family. Mg(2+) is required as a cofactor.

It localises to the cell membrane. The protein resides in the cytoplasm. Its subcellular location is the secreted. The protein localises to the cell surface. The enzyme catalyses (2R)-2-phosphoglycerate = phosphoenolpyruvate + H2O. It functions in the pathway carbohydrate degradation; glycolysis; pyruvate from D-glyceraldehyde 3-phosphate: step 4/5. Catalyzes the reversible conversion of 2-phosphoglycerate (2-PG) into phosphoenolpyruvate (PEP). It is essential for the degradation of carbohydrates via glycolysis. Its function is as follows. 'Moonlights' as a plasminogen receptor. Binds host (chicken) plasminogen; enolase antiserum inhibits M.gallisepticum adherence to chicken embryo fibroblasts. In Mycoplasmoides gallisepticum (strain R(low / passage 15 / clone 2)) (Mycoplasma gallisepticum), this protein is Enolase.